A 61-amino-acid polypeptide reads, in one-letter code: Large ribosomal subunit protein bL32 (61 aa).

Basic residues predominate over residues 1–16; sequence MAVPKRKTSPSKRGMR. The segment at 1-40 is disordered; that stretch reads MAVPKRKTSPSKRGMRRSADALKAPTYIEDKNSGELRRPH. Residues 28–40 are compositionally biased toward basic and acidic residues; sequence IEDKNSGELRRPH.

It belongs to the bacterial ribosomal protein bL32 family.

This Sinorhizobium medicae (strain WSM419) (Ensifer medicae) protein is Large ribosomal subunit protein bL32.